Here is a 199-residue protein sequence, read N- to C-terminus: Protein GrpE (199 aa).

Residues 1–27 (MSEQNTNHESPEQNVAHDNIEHSDSIL) form a disordered region. A compositionally biased stretch (basic and acidic residues) spans 18–27 (DNIEHSDSIL).

It belongs to the GrpE family. As to quaternary structure, homodimer.

The protein localises to the cytoplasm. Its function is as follows. Participates actively in the response to hyperosmotic and heat shock by preventing the aggregation of stress-denatured proteins, in association with DnaK and GrpE. It is the nucleotide exchange factor for DnaK and may function as a thermosensor. Unfolded proteins bind initially to DnaJ; upon interaction with the DnaJ-bound protein, DnaK hydrolyzes its bound ATP, resulting in the formation of a stable complex. GrpE releases ADP from DnaK; ATP binding to DnaK triggers the release of the substrate protein, thus completing the reaction cycle. Several rounds of ATP-dependent interactions between DnaJ, DnaK and GrpE are required for fully efficient folding. The polypeptide is Protein GrpE (Psychrobacter sp. (strain St1)).